Here is a 110-residue protein sequence, read N- to C-terminus: UPF0122 protein BCAH187_A3894 (110 aa).

This sequence belongs to the UPF0122 family.

Functionally, might take part in the signal recognition particle (SRP) pathway. This is inferred from the conservation of its genetic proximity to ftsY/ffh. May be a regulatory protein. The sequence is that of UPF0122 protein BCAH187_A3894 from Bacillus cereus (strain AH187).